A 465-amino-acid chain; its full sequence is Hexokinase-4 (465 aa).

Positions 10–454 (AAKKEKVEQI…SGRGAALVSA (445 aa)) constitute a Hexokinase domain. Residues 67-203 (EGSEVGDFLS…DFEMDVVAMV (137 aa)) form a hexokinase small subdomain region. ATP is bound at residue 78 to 83 (DLGGTN). Substrate is bound by residues 151 to 152 (SF), 168 to 169 (TK), and 204 to 205 (ND). The hexokinase large subdomain stretch occupies residues 204–443 (NDTVATMISC…CEITFIESEE (240 aa)). Threonine 228 contacts ATP. Residues asparagine 231, glutamate 256, and glutamate 290 each coordinate substrate. ATP-binding positions include 295 to 296 (GK), 332 to 336 (TRFVS), and 411 to 415 (SVYKL).

Belongs to the hexokinase family. In terms of assembly, monomer. Interacts with MIDN; the interaction occurs preferentially at low glucose levels and results in inhibition of hexokinase activity. Interacts with GCKR; leading to sequestration in the nucleus.

Its subcellular location is the cytoplasm. The protein resides in the nucleus. It is found in the mitochondrion. It carries out the reaction a D-hexose + ATP = a D-hexose 6-phosphate + ADP + H(+). It catalyses the reaction D-fructose + ATP = D-fructose 6-phosphate + ADP + H(+). The enzyme catalyses D-glucose + ATP = D-glucose 6-phosphate + ADP + H(+). The catalysed reaction is D-mannose + ATP = D-mannose 6-phosphate + ADP + H(+). The protein operates within carbohydrate metabolism; hexose metabolism. It functions in the pathway carbohydrate degradation; glycolysis; D-glyceraldehyde 3-phosphate and glycerone phosphate from D-glucose: step 1/4. Subject to allosteric regulation. Low glucose and high fructose-6-phosphate triggers association with the inhibitor GCKR followed by sequestration in the nucleus. Its function is as follows. Catalyzes the phosphorylation of hexose, such as D-glucose, D-fructose and D-mannose, to hexose 6-phosphate (D-glucose 6-phosphate, D-fructose 6-phosphate and D-mannose 6-phosphate, respectively). Compared to other hexokinases, has a weak affinity for D-glucose, and is effective only when glucose is abundant. Mainly expressed in pancreatic beta cells and the liver and constitutes a rate-limiting step in glucose metabolism in these tissues. Since insulin secretion parallels glucose metabolism and the low glucose affinity of GCK ensures that it can change its enzymatic activity within the physiological range of glucose concentrations, GCK acts as a glucose sensor in the pancreatic beta cell. In pancreas, plays an important role in modulating insulin secretion. In liver, helps to facilitate the uptake and conversion of glucose by acting as an insulin-sensitive determinant of hepatic glucose usage. Required to provide D-glucose 6-phosphate for the synthesis of glycogen. Mediates the initial step of glycolysis by catalyzing phosphorylation of D-glucose to D-glucose 6-phosphate. This chain is Hexokinase-4, found in Homo sapiens (Human).